The chain runs to 466 residues: Muscarinic acetylcholine receptor M2 (466 aa).

At 1–22 (MNNSTNSSNNGLAITSPYKTFE) the chain is on the extracellular side. N-linked (GlcNAc...) asparagine glycans are attached at residues Asn2, Asn3, and Asn6. The helical transmembrane segment at 23 to 45 (VVFIVLVAGSLSLVTIIGNILVM) threads the bilayer. The Cytoplasmic segment spans residues 46 to 59 (VSIKVNRHLQTVNN). The helical transmembrane segment at 60–80 (YFLFSLACADLIIGVFSMNLY) threads the bilayer. The Extracellular segment spans residues 81-97 (TLYTVIGYWPLGPVVCD). A disulfide bridge links Cys96 with Cys176. Residues 98–119 (LWLALDYVVSNASVMNLLIISF) traverse the membrane as a helical segment. The short motif at 120–122 (DRY) is the Important for signaling element. The Cytoplasmic portion of the chain corresponds to 120–139 (DRYFCVTKPLTYPVKRTTKM). The chain crosses the membrane as a helical span at residues 140-162 (AGMMIAAAWVLSFILWAPAILFW). Residues 163–184 (QFIVGVRTVEDGECYIQFFSNA) are Extracellular-facing. A helical membrane pass occupies residues 185–209 (AVTFGTAIAAFYLPVIIMTVLYWHI). Over 210–387 (SRASKSRIKK…PPSREKKVTR (178 aa)) the chain is Cytoplasmic. A disordered region spans residues 218–320 (KKEKKEPVAN…SLGHSKDDNS (103 aa)). Phosphoserine is present on Ser232. A compositionally biased stretch (basic and acidic residues) spans 254 to 270 (GLEHNKIQNGKAPRDGG). 2 stretches are compositionally biased toward polar residues: residues 284-293 (NDSTSVSAVA) and 304-313 (DENTVSTSLG). The helical transmembrane segment at 388-410 (TILAILLAFIITWAPYNVMVLIN) threads the bilayer. Residues 411–418 (TFCAPCIP) are Extracellular-facing. Cys413 and Cys416 form a disulfide bridge. The helical transmembrane segment at 419-442 (NTVWTIGYWLCYINSTINPACYAL) threads the bilayer. Residues 436-440 (NPACY) carry the Important for signaling motif. At 443–466 (CNATFKKTFKHLLMCHYKNIGATR) the chain is on the cytoplasmic side. Phosphothreonine is present on residues Thr446, Thr450, and Thr465.

This sequence belongs to the G-protein coupled receptor 1 family. Muscarinic acetylcholine receptor subfamily. CHRM2 sub-subfamily. Interacts with ARRB1 and ARRB2. Interacts with RACK1; the interaction regulates CHRM2 internalization. Phosphorylated in response to agonist treatment.

The protein resides in the cell membrane. Its subcellular location is the postsynaptic cell membrane. Its function is as follows. The muscarinic acetylcholine receptor mediates various cellular responses, including inhibition of adenylate cyclase, breakdown of phosphoinositides and modulation of potassium channels through the action of G proteins. Primary transducing effect is adenylate cyclase inhibition. Signaling promotes phospholipase C activity, leading to the release of inositol trisphosphate (IP3); this then triggers calcium ion release into the cytosol. This Mus musculus (Mouse) protein is Muscarinic acetylcholine receptor M2 (Chrm2).